Consider the following 473-residue polypeptide: Ribulose bisphosphate carboxylase large chain 2 (473 aa).

The substrate site is built by N116 and T166. Residue K168 is the Proton acceptor of the active site. K170 lines the substrate pocket. Positions 194, 196, and 197 each coordinate Mg(2+). N6-carboxylysine is present on K194. The active-site Proton acceptor is the H287. The substrate site is built by R288, H320, and S372.

This sequence belongs to the RuBisCO large chain family. Type I subfamily. As to quaternary structure, heterohexadecamer of 8 large chains and 8 small chains. The cofactor is Mg(2+).

It catalyses the reaction 2 (2R)-3-phosphoglycerate + 2 H(+) = D-ribulose 1,5-bisphosphate + CO2 + H2O. The enzyme catalyses D-ribulose 1,5-bisphosphate + O2 = 2-phosphoglycolate + (2R)-3-phosphoglycerate + 2 H(+). RuBisCO catalyzes two reactions: the carboxylation of D-ribulose 1,5-bisphosphate, the primary event in carbon dioxide fixation, as well as the oxidative fragmentation of the pentose substrate. Both reactions occur simultaneously and in competition at the same active site. The protein is Ribulose bisphosphate carboxylase large chain 2 of Cereibacter sphaeroides (strain ATCC 17025 / ATH 2.4.3) (Rhodobacter sphaeroides).